We begin with the raw amino-acid sequence, 85 residues long: UPF0291 protein SSA_1878 (85 aa).

The tract at residues 58–85 (GNDVTPEKLRQVQREKGLHGRSLDDPES) is disordered. The segment covering 62 to 85 (TPEKLRQVQREKGLHGRSLDDPES) has biased composition (basic and acidic residues).

This sequence belongs to the UPF0291 family.

It is found in the cytoplasm. In Streptococcus sanguinis (strain SK36), this protein is UPF0291 protein SSA_1878.